The chain runs to 630 residues: GATA-type transcription factor SRE1 (630 aa).

2 disordered regions span residues 1–139 (MTGL…TPLW) and 162–203 (DRPT…RLTD). Polar residues-rich tracts occupy residues 66–82 (DNTQGDGSRNMDSQLQN), 115–133 (KAQSKEQAFTGHSCSNCGT), and 175–196 (YGSSSAQTLDKSRSSTSPTNDG). The GATA-type 1 zinc-finger motif lies at 128 to 152 (CSNCGTKRTPLWRRSPTGATICNAC). Residues 219-237 (CPGGGSCNGTGGAEGCDGC) form a cystein-rich region (CRR) region. The interval 256-283 (HTPRTSPQVSTQGGPGSTEGDAGSSNPE) is disordered. Polar residues predominate over residues 258-267 (PRTSPQVSTQ). A GATA-type 2 zinc finger spans residues 291–315 (CQNCQTTVTPLWRRDENGHPICNAC). Residues 339-609 (KRVVPAMREQ…AKAERRARLQ (271 aa)) are disordered. Residues 349 to 363 (SPPSATQSSNGSVSP) show a composition bias toward polar residues. 2 stretches are compositionally biased toward low complexity: residues 436 to 447 (NNHNNGETTNTH) and 492 to 503 (SSSSASFPNNNP). Residues 504-513 (GRFNSISSLL) are compositionally biased toward polar residues. A compositionally biased stretch (low complexity) spans 558 to 568 (SHSPPRFSPSL). Over residues 595–609 (VDHRDAKAERRARLQ) the composition is skewed to basic and acidic residues. A coiled-coil region spans residues 595-630 (VDHRDAKAERRARLQREAQDMREALKAKERELALLE).

The protein localises to the nucleus. Its function is as follows. GATA-type transcription repressor that regulates iron- acquisition genes through specific binding the GATA sequence element 5'-(G/A)ATC(T/A)GATAA-3' of target promoters in an iron- and zinc-dependent manner. Regulation occurs via direct binding of iron ions. Iron acquisition regulation is critical for survival under both iron-limiting conditions (to acquire essential iron) and iron-replete conditions (to limit iron toxicity). SRE1 targets include genes encoding a number of key iron-regulated factors such as those involved in siderophore biosynthesis, presumed ferric reductase activity, iron-responsive transcriptional regulation, oxidative stress response, as well as genes encoding a number of putative oxidoreductases, metabolic and mitochondrial enzymes, superoxide dismutase, and genes previously identified as induced during nitrosative stress. This Ajellomyces capsulatus (Darling's disease fungus) protein is GATA-type transcription factor SRE1.